We begin with the raw amino-acid sequence, 340 residues long: PI-PLC X domain-containing protein 2 (340 aa).

The PI-PLC X-box domain maps to 42 to 215 (HLHNVPLSNL…KYQVLIFYHC (174 aa)). Catalysis depends on residues His57 and His132.

In terms of tissue distribution, expressed at highest levels in brain, followed by stomach and small intestine. Detected at low levels in kidney, ey, thymus and slkeletal muscle.

Its subcellular location is the nucleus. It catalyses the reaction a 1,2-diacyl-sn-glycero-3-phospho-(1D-myo-inositol) + H2O = 1D-myo-inositol 1-phosphate + a 1,2-diacyl-sn-glycerol + H(+). Its function is as follows. Catalyzes the hydrolysis of inositol from phosphatidylinositol (1,2-diacyl-sn-glycero-3-phospho-(1D-myo-inositol), PI). Could also hydrolyze various multi-phosphorylated derivatives of PI, such as phosphatidylinositol-4,5 bisphosphate (PIP2), releasing inositol-1,4,5-trisphosphate (IP3) and the protein kinase C activator diacylglycerol (DAG), therefore mediating cell signaling. This Mus musculus (Mouse) protein is PI-PLC X domain-containing protein 2 (Plcxd2).